The primary structure comprises 344 residues: Phosphate acyltransferase (344 aa).

Belongs to the PlsX family. In terms of assembly, homodimer. Probably interacts with PlsY.

It is found in the cytoplasm. It carries out the reaction a fatty acyl-[ACP] + phosphate = an acyl phosphate + holo-[ACP]. It participates in lipid metabolism; phospholipid metabolism. Its function is as follows. Catalyzes the reversible formation of acyl-phosphate (acyl-PO(4)) from acyl-[acyl-carrier-protein] (acyl-ACP). This enzyme utilizes acyl-ACP as fatty acyl donor, but not acyl-CoA. The polypeptide is Phosphate acyltransferase (Yersinia enterocolitica serotype O:8 / biotype 1B (strain NCTC 13174 / 8081)).